The following is a 390-amino-acid chain: Serpin B4 (390 aa).

Methionine 1 carries the post-translational modification N-acetylmethionine.

The protein belongs to the serpin family. Ov-serpin subfamily. As to expression, squamous cells.

The protein resides in the cytoplasm. Its function is as follows. May act as a protease inhibitor to modulate the host immune response against tumor cells. This chain is Serpin B4 (SERPINB4), found in Homo sapiens (Human).